Consider the following 552-residue polypeptide: Urocanate hydratase (552 aa).

NAD(+)-binding positions include 49 to 50, Gln-127, 173 to 175, Asp-193, 239 to 240, 260 to 264, 270 to 271, and Tyr-319; these read GG, GMG, NA, QTSAH, and YI. Cys-407 is an active-site residue. Gly-489 is an NAD(+) binding site.

It belongs to the urocanase family. NAD(+) serves as cofactor.

Its subcellular location is the cytoplasm. It carries out the reaction 4-imidazolone-5-propanoate = trans-urocanate + H2O. It participates in amino-acid degradation; L-histidine degradation into L-glutamate; N-formimidoyl-L-glutamate from L-histidine: step 2/3. Catalyzes the conversion of urocanate to 4-imidazolone-5-propionate. The polypeptide is Urocanate hydratase (Bacillus cereus (strain ATCC 14579 / DSM 31 / CCUG 7414 / JCM 2152 / NBRC 15305 / NCIMB 9373 / NCTC 2599 / NRRL B-3711)).